A 187-amino-acid chain; its full sequence is Large ribosomal subunit protein uL13 (187 aa).

The protein belongs to the universal ribosomal protein uL13 family.

In Dictyostelium discoideum (Social amoeba), this protein is Large ribosomal subunit protein uL13 (rpl13a).